The primary structure comprises 310 residues: MKLTFLGTGAAIPTKYRAHPSISLKFDGEIFLFDCGENTQRQIIFTDVSPMKINNIFISHLHGDHILGIPGLMQSIAFQGRTKPLNIYGPKETAKMIENILNVGYHSIDYPINVYEISAKSPEKIISSDNYEVFSFPVVHSVPALAYVFKQVKKPRMDLEKVNKLGIEIGPDLKRLKDGFNIELNGKIITPDDVTVPPKKGICVGYSGDTIPLNEFAEFLKELKCTTLIHEATFDKSMDKNAKETLHSTVSDALNIAKLSGVNTVILTHISARYDEISAYEKDIVEFKAEHPDLHILIAEDLMEYSLKGK.

Residues His-60, His-62, Asp-64, His-65, His-140, Asp-209, and His-269 each coordinate Zn(2+). Catalysis depends on Asp-64, which acts as the Proton acceptor.

The protein belongs to the RNase Z family. As to quaternary structure, homodimer. Requires Zn(2+) as cofactor.

The enzyme catalyses Endonucleolytic cleavage of RNA, removing extra 3' nucleotides from tRNA precursor, generating 3' termini of tRNAs. A 3'-hydroxy group is left at the tRNA terminus and a 5'-phosphoryl group is left at the trailer molecule.. Its function is as follows. Zinc phosphodiesterase, which displays some tRNA 3'-processing endonuclease activity. Probably involved in tRNA maturation, by removing a 3'-trailer from precursor tRNA. The sequence is that of Ribonuclease Z from Methanococcus maripaludis (strain C7 / ATCC BAA-1331).